Here is a 1252-residue protein sequence, read N- to C-terminus: Myosin-1 (1252 aa).

The tract at residues 1-27 (MAPSKKAGKKVTPASKKSAGQGKVAKA) is disordered. A Myosin motor domain is found at 38 to 712 (VGVSDMTLLT…TLFALETMRD (675 aa)). An ATP-binding site is contributed by 128–135 (GESGAGKT). S356 is modified (phosphoserine). An actin-binding region spans residues 403-485 (IIGILDIFGF…PGIFAALNDA (83 aa)). IQ domains lie at 716–736 (HNMAARIQRAFRNYMRYKHEC) and 737–762 (ARRIQRFWKNNKEGIAYAQTRDYGHQ). The region spanning 770–953 (RRRFSLLSYR…TVHVASGEPP (184 aa)) is the TH1 domain. Disordered regions lie at residues 945 to 1049 (VHVA…PETP) and 1103 to 1228 (PPKA…PATA). Composition is skewed to pro residues over residues 989-999 (RSVPKPKPVAQ) and 1028-1046 (RPPPAPPRNIAPPPPPAKP). The 59-residue stretch at 1046–1104 (PETPMYRAKFAFEGQEGEMSLKKDDVVELVEKDDNGWWLVKMDGVEGWAPNNYLELVPP) folds into the SH3 domain. Residues 1162-1175 (ADTTPASSRPSSAI) are compositionally biased toward polar residues. Positions 1178–1193 (KPPPPVAAKPKPPVIP) are enriched in pro residues. Residues 1194 to 1203 (VKPSVSAKGP) show a composition bias toward low complexity. Pro residues predominate over residues 1204–1215 (AKPPIPTAPRPP). Residues 1216–1228 (AASTSRSSKPATA) are compositionally biased toward low complexity.

This sequence belongs to the TRAFAC class myosin-kinesin ATPase superfamily. Myosin family. In terms of processing, phosphorylation of the TEDS site (Ser-356) is required for the polarization of the actin cytoskeleton. Phosphorylation probably activates the myosin-I ATPase activity.

The protein localises to the cytoplasm. Its subcellular location is the cytoskeleton. It is found in the actin patch. In terms of biological role, type-I myosin implicated in the organization of the actin cytoskeleton. Required for proper actin cytoskeleton polarization. At the cell cortex, assembles in patch-like structures together with proteins from the actin-polymerizing machinery and promotes actin assembly. Functions as actin nucleation-promoting factor (NPF) for the Arp2/3 complex. This chain is Myosin-1 (MYO1), found in Laccaria bicolor (strain S238N-H82 / ATCC MYA-4686) (Bicoloured deceiver).